The sequence spans 193 residues: Early light-induced protein 2, chloroplastic (193 aa).

A chloroplast-targeting transit peptide spans 1 to 43; the sequence is MATASFNMQSVFAAPSGVLTTRNIRNTNQLFFKRIAPVGVRCM. The interval 46–80 is disordered; sequence GDPIKEDPSVPSTSTSATPPQMPQSPPPPVSKPKV. Residues 54–64 show a composition bias toward low complexity; it reads SVPSTSTSATP. The span at 65–76 shows a compositional bias: pro residues; it reads PQMPQSPPPPVS. 3 helical membrane passes run 102–122, 129–149, and 173–193; these read LAMV…ENVF, GVGW…VPLF, and FAML…GTLV.

Belongs to the ELIP/psbS family.

The protein resides in the plastid. The protein localises to the chloroplast thylakoid membrane. Functionally, probably involved in the integration of pigments into the mature light-harvesting pigment-protein complexes. Light-harvesting chlorophyll (LHC) a/b-binding protein required to ensure a high rate of chlorophyll accumulation during deetiolation in continuous high light. Involved in seed germination. May fulfill a photoprotective functions. Prevents excess accumulation of free chlorophyll by inhibiting the entire chlorophyll biosynthesis pathway (e.g. 5-aminolevulinate synthesis and Mg-protoporphyrin IX chelatase activity), and hence prevent photooxidative stress. In Arabidopsis thaliana (Mouse-ear cress), this protein is Early light-induced protein 2, chloroplastic.